Here is a 604-residue protein sequence, read N- to C-terminus: Aspartate--tRNA(Asp/Asn) ligase (604 aa).

Glu-175 lines the L-aspartate pocket. The tract at residues 199–202 (QMFK) is aspartate. The L-aspartate site is built by Arg-221 and His-451. 221–223 (RDE) is an ATP binding site. Residue Glu-485 coordinates ATP. Position 492 (Arg-492) interacts with L-aspartate. 537–540 (GIDR) contributes to the ATP binding site.

It belongs to the class-II aminoacyl-tRNA synthetase family. Type 1 subfamily. As to quaternary structure, homodimer.

The protein localises to the cytoplasm. The catalysed reaction is tRNA(Asx) + L-aspartate + ATP = L-aspartyl-tRNA(Asx) + AMP + diphosphate. Its function is as follows. Aspartyl-tRNA synthetase with relaxed tRNA specificity since it is able to aspartylate not only its cognate tRNA(Asp) but also tRNA(Asn). Reaction proceeds in two steps: L-aspartate is first activated by ATP to form Asp-AMP and then transferred to the acceptor end of tRNA(Asp/Asn). The polypeptide is Aspartate--tRNA(Asp/Asn) ligase (Erythrobacter litoralis (strain HTCC2594)).